A 339-amino-acid chain; its full sequence is Phenylalanine--tRNA ligase alpha subunit (339 aa).

Glu250 contributes to the Mg(2+) binding site.

The protein belongs to the class-II aminoacyl-tRNA synthetase family. Phe-tRNA synthetase alpha subunit type 1 subfamily. As to quaternary structure, tetramer of two alpha and two beta subunits. Mg(2+) is required as a cofactor.

It is found in the cytoplasm. It carries out the reaction tRNA(Phe) + L-phenylalanine + ATP = L-phenylalanyl-tRNA(Phe) + AMP + diphosphate + H(+). This chain is Phenylalanine--tRNA ligase alpha subunit, found in Flavobacterium johnsoniae (strain ATCC 17061 / DSM 2064 / JCM 8514 / BCRC 14874 / CCUG 350202 / NBRC 14942 / NCIMB 11054 / UW101) (Cytophaga johnsonae).